The primary structure comprises 273 residues: F-actin-capping protein subunit alpha (273 aa).

Belongs to the F-actin-capping protein alpha subunit family. As to quaternary structure, component of the F-actin capping complex, composed of a heterodimer of an alpha and a beta subunit.

The protein localises to the cytoplasm. It is found in the cytoskeleton. It localises to the actin patch. Functionally, F-actin-capping proteins bind in a Ca(2+)-independent manner to the fast growing ends of actin filaments (barbed end) thereby blocking the exchange of subunits at these ends. Unlike other capping proteins (such as gelsolin and severin), these proteins do not sever actin filaments. The polypeptide is F-actin-capping protein subunit alpha (fac-1) (Neurospora crassa (strain ATCC 24698 / 74-OR23-1A / CBS 708.71 / DSM 1257 / FGSC 987)).